The primary structure comprises 173 residues: RNA pyrophosphohydrolase (173 aa).

One can recognise a Nudix hydrolase domain in the interval 6–149 (GFRANVGIII…KRDVYRKVMK (144 aa)). The short motif at 38–59 (GGVDDGETPEEAMYRELYEEVG) is the Nudix box element.

This sequence belongs to the Nudix hydrolase family. RppH subfamily. The cofactor is a divalent metal cation.

Accelerates the degradation of transcripts by removing pyrophosphate from the 5'-end of triphosphorylated RNA, leading to a more labile monophosphorylated state that can stimulate subsequent ribonuclease cleavage. The protein is RNA pyrophosphohydrolase of Shewanella woodyi (strain ATCC 51908 / MS32).